We begin with the raw amino-acid sequence, 667 residues long: Leucine aminopeptidase 2 (667 aa).

A peptide is bound by residues 188–190 and 318–323; these read QCQ and PYGGME. A Zn(2+)-binding site is contributed by His347. Glu348 serves as the catalytic Proton acceptor. The Zn(2+) site is built by His351 and Glu370. Residue Tyr436 is the Proton donor of the active site.

It belongs to the peptidase M1 family. Zn(2+) serves as cofactor.

It is found in the cytoplasm. The protein localises to the nucleus. It catalyses the reaction an epoxide + H2O = an ethanediol. In terms of biological role, aminopeptidase that preferentially cleaves di- and tripeptides. Also has low epoxide hydrolase activity (in vitro). Can hydrolyze the epoxide leukotriene LTA(4) but it forms preferentially 5,6-dihydroxy-7,9,11,14-eicosatetraenoic acid rather than the cytokine leukotriene B(4) as the product compared to the homologous mammalian enzyme (in vitro). The polypeptide is Leucine aminopeptidase 2 (ara-1) (Neurospora crassa (strain ATCC 24698 / 74-OR23-1A / CBS 708.71 / DSM 1257 / FGSC 987)).